The chain runs to 161 residues: Nucleotide-binding protein Lferr_1091 (161 aa).

This sequence belongs to the YajQ family.

Functionally, nucleotide-binding protein. The chain is Nucleotide-binding protein Lferr_1091 from Acidithiobacillus ferrooxidans (strain ATCC 53993 / BNL-5-31) (Leptospirillum ferrooxidans (ATCC 53993)).